The chain runs to 217 residues: KH domain-containing protein 3 (217 aa).

An involved in RNA binding region spans residues 1–40 (MDAPRRFPTLVQLMQPKAMPVEVLGHLPKRFSWFHSEFLK). The 64-residue stretch at 40-103 (KNPKVVRLEV…SYQEDTIKMI (64 aa)) folds into the KH; atypical domain. The tract at residues 129 to 217 (QKAETQRSSI…EDARDPVTRL (89 aa)) is disordered. The segment covering 138-155 (IEVREAGTQRSVEVREAG) has biased composition (basic and acidic residues). 2 positions are modified to phosphothreonine; by ATM: Thr-145 and Thr-156. Composition is skewed to polar residues over residues 156–170 (TQRS…TQGS) and 177–194 (AGTQ…TQRS). Phosphoserine is present on Ser-182. Over residues 205–217 (RFREDARDPVTRL) the composition is skewed to basic and acidic residues.

Belongs to the KHDC1 family. As to quaternary structure, component of the subcortical maternal complex (SCMC), at least composed of NLRP5, KHDC3L, OOEP, and TLE6 isoform 1. Within the complex, interacts with NLRP5, KHDC3L and TLE6 isoform 1. The SCMC may facilitate translocation of its components between the nuclear and cytoplasmic compartments. Forms a scaffold complex with OOEP/FLOPED, and interacts with BLM and TRIM25 at DNA replication forks. Interacts with PARP1; the interaction is increased following the formation of DNA double-strand breaks. Interacts with NUMA1. As to expression, expression appears to be maximal in germinal vesicle oocytes, it tails off through metaphase II oocytes and is undetectable following the completion of the oocyte to embryo transition.

The protein resides in the cytoplasm. The protein localises to the cell cortex. It localises to the nucleus. It is found in the mitochondrion. Its subcellular location is the cytoskeleton. The protein resides in the microtubule organizing center. The protein localises to the centrosome. It localises to the chromosome. Functionally, component of the subcortical maternal complex (SCMC), a multiprotein complex that plays a key role in early embryonic development. The SCMC complex is a structural constituent of cytoplasmic lattices, which consist in fibrous structures found in the cytoplasm of oocytes and preimplantation embryos. They are required to store maternal proteins critical for embryonic development, such as proteins that control epigenetic reprogramming of the preimplantation embryo, and prevent their degradation or activation. KHDC3 ensures proper spindle assembly by regulating the localization of AURKA via RHOA signaling and of PLK1 via a RHOA-independent process. Required for the localization of MAD2L1 to kinetochores to enable spindle assembly checkpoint function. As part of the OOEP-KHDC3 scaffold, recruits BLM and TRIM25 to DNA replication forks, thereby promoting the ubiquitination of BLM by TRIM25, enhancing BLM retainment at replication forks and therefore promoting stalled replication fork restart. Regulates homologous recombination-mediated DNA repair via recruitment of RAD51 to sites of DNA double-strand breaks, and sustainment of PARP1 activity, which in turn modulates downstream ATM or ATR activation. Activation of ATM or ATR in response to DNA double-strand breaks may be cell-type specific. Its role in DNA double-strand break repair is independent of its role in restarting stalled replication forks. Promotes neural stem cell neurogenesis and neuronal differentiation in the hippocampus. May regulate normal development of learning, memory and anxiety. Capable of binding RNA. This chain is KH domain-containing protein 3, found in Homo sapiens (Human).